Consider the following 339-residue polypeptide: MKFGAIYEEYLREQQDKYLTKCSHVEYKRLKKVLKKCRVGRSLQEDCPNGDQQEGNNESPDICKCNSCTLCDQMFFTELTKEASEIAGCFSSRVQRLLNLHVPSGFLRYIWRVRQCFIDDQQIMVQEGRMLLNYVTMNAIAIRKILKKYDKIHGSVSGRDFKSKMQTDHIELLQSPWLIELGAFHLNCNSSDIDETVGFLKNEFFKNFSCDLTEARPLMTMAISETMKYEYSLTCPICLDTLFNPYALSCGHLFCKGCACGAASVYIFQGVKSAPPEAKCPVCRSDGVFAHAVHMTELDLLIKTRSKDYWRQRLREERNEMVKQSKEYWDSQAMLSMGI.

Positions Met-1 to Ser-163 constitute an SPX domain. An RING-type zinc finger spans residues Cys-235–Arg-284.

This sequence belongs to the RING-type zinc finger family.

It carries out the reaction S-ubiquitinyl-[E2 ubiquitin-conjugating enzyme]-L-cysteine + [acceptor protein]-L-lysine = [E2 ubiquitin-conjugating enzyme]-L-cysteine + N(6)-ubiquitinyl-[acceptor protein]-L-lysine.. The protein operates within protein modification; protein ubiquitination. The chain is Probable E3 ubiquitin-protein ligase BAH1-like 1 from Oryza sativa subsp. indica (Rice).